We begin with the raw amino-acid sequence, 628 residues long: Chaperone protein HtpG (628 aa).

Positions 1–333 (MTTDTKATET…SADLPLNVSR (333 aa)) are a; substrate-binding. The segment at 334-549 (EMIQESPLLA…EHGPDRQFER (216 aa)) is b. The segment at 550–628 (LMNAAGRLDK…RLIARGIAKG (79 aa)) is c.

The protein belongs to the heat shock protein 90 family. In terms of assembly, homodimer.

The protein localises to the cytoplasm. Its function is as follows. Molecular chaperone. Has ATPase activity. The polypeptide is Chaperone protein HtpG (Mesorhizobium japonicum (strain LMG 29417 / CECT 9101 / MAFF 303099) (Mesorhizobium loti (strain MAFF 303099))).